The chain runs to 536 residues: Cytochrome P450 monooxygenase fscF (536 aa).

The chain crosses the membrane as a helical span at residues 9 to 29 (VSWLCALFTAIALYCIAVAFY). Cys464 serves as a coordination point for heme.

This sequence belongs to the cytochrome P450 family. The cofactor is heme.

Its subcellular location is the membrane. Its pathway is secondary metabolite biosynthesis. Functionally, cytochrome P450 monooxygenase; part of the fragmented gene cluster that mediates the biosynthesis of fusarochromene, a tryptophan-derived metabolite closely related to a group of mycotoxins including fusarochromanone. Within the pathway, fscF catalyzes the epoxidation of desacetylfusarochromene which opens the way to the production of fusarochromanones. The first step of the pathway is the epimerization of L-tryptophan to D-tryptophan in the presence of the NRPS-like tryptophan epimerase fscC. D-tryptophan is subsequently hydroxylated by the tryptophan 6-hydroxylase fscE to yield 6-hydroxytryptophan. The pyrrole ring undergoes cleavaged by the tryptophan 2,3-dioxygenase fscD and is finally converted to 4-hydroxykyrunenine by the hydrolase fscH. The NRPS-like oxidoreductase fscA reduces the carboxyl group to primary alcohol and the DMATS-type prenyltransferase fscG performs prenylation, followed by the formation of a chromene ring catalyzed by the oxidoreductase fscI, which leads to desacetylfusarochromene. Epoxidation by fscF and rearrangement reactions of chromene double bonds convert compound desacetylfusarochromene to fusarochromanones. Although specific acetyltransferases were not found near the fsc gene cluster, several predicted enzymes containing the N-acetyltransferase superfamily domain are present in the genome of F.equiseti. These predicted enzymes may have the potential to convert desacetylfusarochromene to fusarochromene. In Fusarium equiseti (Fusarium scirpi), this protein is Cytochrome P450 monooxygenase fscF.